The sequence spans 161 residues: Dihydrofolate reductase (161 aa).

One can recognise a DHFR domain in the interval 2–161 (KISLISAISN…YNFCFEILSR (160 aa)). 6 to 8 (ISA) contacts substrate. Residues 7-8 (SA) and 15-20 (IGHNNK) each bind NADP(+). D28 is a binding site for substrate. 44-47 (GRLT) is an NADP(+) binding site. Residue R59 coordinates substrate. Residues 64 to 66 (ISH) and 96 to 101 (IGGSKI) each bind NADP(+). Residue T115 participates in substrate binding.

It belongs to the dihydrofolate reductase family.

The enzyme catalyses (6S)-5,6,7,8-tetrahydrofolate + NADP(+) = 7,8-dihydrofolate + NADPH + H(+). It participates in cofactor biosynthesis; tetrahydrofolate biosynthesis; 5,6,7,8-tetrahydrofolate from 7,8-dihydrofolate: step 1/1. Key enzyme in folate metabolism. Catalyzes an essential reaction for de novo glycine and purine synthesis, and for DNA precursor synthesis. The chain is Dihydrofolate reductase (folA) from Buchnera aphidicola subsp. Schizaphis graminum (strain Sg).